Consider the following 63-residue polypeptide: Large ribosomal subunit protein uL29 (63 aa).

This sequence belongs to the universal ribosomal protein uL29 family.

This chain is Large ribosomal subunit protein uL29, found in Bordetella petrii (strain ATCC BAA-461 / DSM 12804 / CCUG 43448).